The following is a 198-amino-acid chain: ATP-dependent Clp protease proteolytic subunit (198 aa).

Catalysis depends on Ser-101, which acts as the Nucleophile. His-126 is an active-site residue.

The protein belongs to the peptidase S14 family. As to quaternary structure, component of the chloroplastic Clp protease core complex.

It is found in the plastid. The protein localises to the chloroplast stroma. It carries out the reaction Hydrolysis of proteins to small peptides in the presence of ATP and magnesium. alpha-casein is the usual test substrate. In the absence of ATP, only oligopeptides shorter than five residues are hydrolyzed (such as succinyl-Leu-Tyr-|-NHMec, and Leu-Tyr-Leu-|-Tyr-Trp, in which cleavage of the -Tyr-|-Leu- and -Tyr-|-Trp bonds also occurs).. Cleaves peptides in various proteins in a process that requires ATP hydrolysis. Has a chymotrypsin-like activity. Plays a major role in the degradation of misfolded proteins. The chain is ATP-dependent Clp protease proteolytic subunit from Psilotum nudum (Whisk fern).